A 149-amino-acid polypeptide reads, in one-letter code: Myoglobin (149 aa).

Position 2 is an N-acetylvaline (V2). Residues 2 to 143 (VDWEKVNSVW…ICSDIEKEYK (142 aa)) enclose the Globin domain. H89 provides a ligand contact to heme b.

It belongs to the globin family. In terms of assembly, monomeric.

It is found in the cytoplasm. It localises to the sarcoplasm. The enzyme catalyses Fe(III)-heme b-[protein] + nitric oxide + H2O = Fe(II)-heme b-[protein] + nitrite + 2 H(+). It carries out the reaction H2O2 + AH2 = A + 2 H2O. Monomeric heme protein which primary function is to store oxygen and facilitate its diffusion within muscle tissues. Reversibly binds oxygen through a pentacoordinated heme iron and enables its timely and efficient release as needed during periods of heightened demand. Depending on the oxidative conditions of tissues and cells, and in addition to its ability to bind oxygen, it also has a nitrite reductase activity whereby it regulates the production of bioactive nitric oxide. Under stress conditions, like hypoxia and anoxia, it also protects cells against reactive oxygen species thanks to its pseudoperoxidase activity. The chain is Myoglobin (mb) from Mustelus antarcticus (Gummy shark).